We begin with the raw amino-acid sequence, 198 residues long: Putative nitroreductase MJ1384 (198 aa).

This sequence belongs to the nitroreductase family. It depends on FMN as a cofactor.

The protein is Putative nitroreductase MJ1384 of Methanocaldococcus jannaschii (strain ATCC 43067 / DSM 2661 / JAL-1 / JCM 10045 / NBRC 100440) (Methanococcus jannaschii).